The following is an 861-amino-acid chain: Homeobox-leucine zipper protein HOX29 (861 aa).

A DNA-binding region (homeobox) is located at residues 2-65 (DASKYVRYTP…NRRCREKQRK (64 aa)). A coiled-coil region spans residues 57-99 (RRCREKQRKESSRLQALNRKLTAMNKLLMEENDRLQKQVSQLV). Residues 162–390 (RDASPAGLMS…VAHEDTRSVI (229 aa)) enclose the START domain.

This sequence belongs to the HD-ZIP homeobox family. Class III subfamily. Expressed in roots, stems and leaf blades.

The protein localises to the nucleus. Functionally, probable transcription factor. This chain is Homeobox-leucine zipper protein HOX29 (HOX29), found in Oryza sativa subsp. indica (Rice).